The chain runs to 239 residues: Small ribosomal subunit protein uS3c (239 aa).

The KH type-2 domain occupies 43-139 (IKNYIQKNRK…RFNISIEKVK (97 aa)). Residues 50–74 (NRKKGSNRKIESDSSSEVITHNRKM) form a disordered region.

Belongs to the universal ribosomal protein uS3 family. As to quaternary structure, part of the 30S ribosomal subunit.

The protein resides in the plastid. The protein localises to the chloroplast. The chain is Small ribosomal subunit protein uS3c (rps3) from Hordeum vulgare (Barley).